We begin with the raw amino-acid sequence, 455 residues long: MGIPVNSENVNDETEGDVAGKEVYYLCGNSLGLMPKDTKETVTRELDAWRDRAVESHFKHPTDTSWVDIDLPVVPLLAPIVGGKNEEVAVMNTLTANLNSLLVSFYRPTKKRFKIVFEKKAFPSDYYAFYNQCRLHNFDPNECILQISARPNETFLRTEDILKVIEENNESIALVCLPGIQYYSGQLFEIERITKFAHQYPEIIVGWDLAHAVGNVPLKLHDWGVDFACWCSYKYLNSGPGSIGGLFIHEKWHHSALKFGDDVNHDEYRPRLAGWWGNNNEKRFQMLEKFEPIKGALGFRQSNPSVLDVVCLQSSLKIFQKYGGVENLRLKSLKLTKYLINQLQKSPYYHPKKQSSKEELGFRIITPIQNESQYGAQISIQLTPSRLTGKNKDTMEIVFEYMHRHGVVVDERKPNVIRISPVPLYNTFQDVFTTVAILNSALDSVKKSIKALKSN.

Pyridoxal 5'-phosphate-binding positions include leucine 94, threonine 95, 122 to 125 (FPSD), aspartate 208, histidine 211, and tyrosine 233. N6-(pyridoxal phosphate)lysine is present on lysine 234. Residues tryptophan 275 and asparagine 303 each contribute to the pyridoxal 5'-phosphate site.

It belongs to the kynureninase family. Homodimer. Requires pyridoxal 5'-phosphate as cofactor.

The protein resides in the cytoplasm. The catalysed reaction is L-kynurenine + H2O = anthranilate + L-alanine + H(+). It catalyses the reaction 3-hydroxy-L-kynurenine + H2O = 3-hydroxyanthranilate + L-alanine + H(+). It functions in the pathway amino-acid degradation; L-kynurenine degradation; L-alanine and anthranilate from L-kynurenine: step 1/1. Its pathway is cofactor biosynthesis; NAD(+) biosynthesis; quinolinate from L-kynurenine: step 2/3. In terms of biological role, catalyzes the cleavage of L-kynurenine (L-Kyn) and L-3-hydroxykynurenine (L-3OHKyn) into anthranilic acid (AA) and 3-hydroxyanthranilic acid (3-OHAA), respectively. This Vanderwaltozyma polyspora (strain ATCC 22028 / DSM 70294 / BCRC 21397 / CBS 2163 / NBRC 10782 / NRRL Y-8283 / UCD 57-17) (Kluyveromyces polysporus) protein is Kynureninase.